Consider the following 268-residue polypeptide: Large ribosomal subunit protein uL4 (268 aa).

This sequence belongs to the universal ribosomal protein uL4 family. In terms of assembly, part of the 50S ribosomal subunit.

Its function is as follows. One of the primary rRNA binding proteins, this protein initially binds near the 5'-end of the 23S rRNA. It is important during the early stages of 50S assembly. It makes multiple contacts with different domains of the 23S rRNA in the assembled 50S subunit and ribosome. Functionally, forms part of the polypeptide exit tunnel. The polypeptide is Large ribosomal subunit protein uL4 (Nanoarchaeum equitans (strain Kin4-M)).